Reading from the N-terminus, the 513-residue chain is ATP synthase subunit alpha (513 aa).

171 to 178 serves as a coordination point for ATP; sequence GDRQIGKT.

Belongs to the ATPase alpha/beta chains family. As to quaternary structure, F-type ATPases have 2 components, CF(1) - the catalytic core - and CF(0) - the membrane proton channel. CF(1) has five subunits: alpha(3), beta(3), gamma(1), delta(1), epsilon(1). CF(0) has three main subunits: a(1), b(2) and c(9-12). The alpha and beta chains form an alternating ring which encloses part of the gamma chain. CF(1) is attached to CF(0) by a central stalk formed by the gamma and epsilon chains, while a peripheral stalk is formed by the delta and b chains.

It is found in the cell inner membrane. It carries out the reaction ATP + H2O + 4 H(+)(in) = ADP + phosphate + 5 H(+)(out). Produces ATP from ADP in the presence of a proton gradient across the membrane. The alpha chain is a regulatory subunit. The chain is ATP synthase subunit alpha from Wolbachia sp. subsp. Drosophila simulans (strain wRi).